Here is a 260-residue protein sequence, read N- to C-terminus: Electron transfer flavoprotein subunit beta (260 aa).

This sequence belongs to the ETF beta-subunit/FixA family. In terms of assembly, heterodimer of an alpha and a beta subunit. The cofactor is FAD. AMP serves as cofactor.

In terms of biological role, the electron transfer flavoprotein serves as a specific electron acceptor for other dehydrogenases. It transfers the electrons to the main respiratory chain via ETF-ubiquinone oxidoreductase (ETF dehydrogenase). In Thermoanaerobacterium thermosaccharolyticum (strain ATCC 7956 / DSM 571 / NCIMB 9385 / NCA 3814 / NCTC 13789 / WDCM 00135 / 2032) (Clostridium thermosaccharolyticum), this protein is Electron transfer flavoprotein subunit beta (etfB).